The primary structure comprises 181 residues: Isopentenyl-diphosphate Delta-isomerase (181 aa).

Mn(2+)-binding residues include His-25 and His-32. In terms of domain architecture, Nudix hydrolase spans Pro-30 to Met-164. The active site involves Cys-67. Cys-67 provides a ligand contact to Mg(2+). His-69 is a Mn(2+) binding site. Glu-87 serves as a coordination point for Mg(2+). Positions 114 and 116 each coordinate Mn(2+). Residue Glu-116 is part of the active site.

Belongs to the IPP isomerase type 1 family. As to quaternary structure, homodimer. The cofactor is Mg(2+). Mn(2+) serves as cofactor.

It localises to the cytoplasm. It catalyses the reaction isopentenyl diphosphate = dimethylallyl diphosphate. The protein operates within isoprenoid biosynthesis; dimethylallyl diphosphate biosynthesis; dimethylallyl diphosphate from isopentenyl diphosphate: step 1/1. Functionally, catalyzes the 1,3-allylic rearrangement of the homoallylic substrate isopentenyl (IPP) to its highly electrophilic allylic isomer, dimethylallyl diphosphate (DMAPP). The sequence is that of Isopentenyl-diphosphate Delta-isomerase from Salmonella choleraesuis (strain SC-B67).